The chain runs to 101 residues: Apolipoprotein C-II (101 aa).

The first 26 residues, 1-26 (MGTRYFLALFLILLVLGFKVQGVAMA), serve as a signal peptide directing secretion. Residues 66–74 (TMDEKIRDI) form a lipid binding region. A lipoprotein lipase cofactor region spans residues 78–101 (STAAVTTYAGIFTDQLLSLLKGDQ).

This sequence belongs to the apolipoprotein C2 family. In terms of processing, proapolipoprotein C-II is synthesized as a sialic acid containing glycoprotein which is subsequently desialylated prior to its proteolytic processing. Post-translationally, proapolipoprotein C-II undergoes proteolytic cleavage of its N-terminal hexapeptide to generate apolipoprotein C-II. In bovine, proapolipoprotein C-II was found to be the minor form whereas apolipoprotein C-II was found to be the major form in plasma.

It localises to the secreted. Its function is as follows. Component of chylomicrons, very low-density lipoproteins (VLDL), low-density lipoproteins (LDL), and high-density lipoproteins (HDL) in plasma. Plays an important role in lipoprotein metabolism as an activator of lipoprotein lipase. Both proapolipoprotein C-II and apolipoprotein C-II can activate lipoprotein lipase. In Camelus dromedarius (Dromedary), this protein is Apolipoprotein C-II (APOC2).